Reading from the N-terminus, the 452-residue chain is Gastrin/cholecystokinin type B receptor (452 aa).

The interval 1-21 (MELLKLNRSVQGPGPGSGSSL) is disordered. Topologically, residues 1–57 (MELLKLNRSVQGPGPGSGSSLCRPGVSLLNSSSAGNLSCDPPRIRGTGTRELEMAIR) are extracellular. N-linked (GlcNAc...) asparagine glycans are attached at residues N7, N30, and N36. The helical transmembrane segment at 58–79 (ITLYAVIFLMSVGGNVLIIVVL) threads the bilayer. The Cytoplasmic portion of the chain corresponds to 80–87 (GLSRRLRT). The chain crosses the membrane as a helical span at residues 88-109 (VTNAFLLSLAVSDLLLAVACMP). The Extracellular segment spans residues 110-131 (FTLLPNLMGTFIFGTVICKAIS). The cysteines at positions 127 and 205 are disulfide-linked. A helical transmembrane segment spans residues 132-150 (YLMGVSVSVSTLNLVAIAL). Residues 151-170 (ERYSAICRPLQARVWQTRSH) lie on the Cytoplasmic side of the membrane. Residues 171 to 189 (AARVILATWLLSGLLMVPY) form a helical membrane-spanning segment. Topologically, residues 190–219 (PVYTMVQPVGPRVLQCMHRWPSARVQQTWS) are extracellular. Residues 220–242 (VLLLLLLFFIPGVVIAVAYGLIS) form a helical membrane-spanning segment. The Cytoplasmic segment spans residues 243–338 (RELYLGLHFD…KLLAKKRVVR (96 aa)). The tract at residues 257–286 (SETQSRARNQGGLPGGAAPGPVHQNGGCRP) is disordered. The helical transmembrane segment at 339–360 (MLLVIVLLFFLCWLPVYSVNTW) threads the bilayer. Over 361–378 (RAFDGPGAQRALSGAPIS) the chain is Extracellular. The chain crosses the membrane as a helical span at residues 379–399 (FIHLLSYVSACVNPLVYCFMH). Topologically, residues 400–452 (RRFRQACLDTCARCCPRPPRARPQPLPDEDPPTPSIASLSRLSYTTISTLGPG) are cytoplasmic. C413 carries the S-palmitoyl cysteine lipid modification. A disordered region spans residues 421-452 (RPQPLPDEDPPTPSIASLSRLSYTTISTLGPG). The segment covering 434–452 (SIASLSRLSYTTISTLGPG) has biased composition (polar residues).

Belongs to the G-protein coupled receptor 1 family. As to expression, parietal cells, pancreas, brain and various neoplastic tissues.

It is found in the cell membrane. Functionally, receptor for gastrin and cholecystokinin. The CCK-B receptors occur throughout the central nervous system where they modulate anxiety, analgesia, arousal, and neuroleptic activity. This receptor mediates its action by association with G proteins that activate a phosphatidylinositol-calcium second messenger system. This chain is Gastrin/cholecystokinin type B receptor (Cckbr), found in Rattus norvegicus (Rat).